Consider the following 371-residue polypeptide: Dual-specificity RNA methyltransferase RlmN (371 aa).

Glu-92 acts as the Proton acceptor in catalysis. One can recognise a Radical SAM core domain in the interval 98 to 337 (EADRATLCVS…VTVRKTRGDD (240 aa)). Cys-105 and Cys-342 are disulfide-bonded. Residues Cys-112, Cys-116, and Cys-119 each contribute to the [4Fe-4S] cluster site. S-adenosyl-L-methionine contacts are provided by residues 166-167 (GE), Ser-198, 220-222 (SLH), and Asn-299. Catalysis depends on Cys-342, which acts as the S-methylcysteine intermediate.

Belongs to the radical SAM superfamily. RlmN family. [4Fe-4S] cluster serves as cofactor.

The protein resides in the cytoplasm. The catalysed reaction is adenosine(2503) in 23S rRNA + 2 reduced [2Fe-2S]-[ferredoxin] + 2 S-adenosyl-L-methionine = 2-methyladenosine(2503) in 23S rRNA + 5'-deoxyadenosine + L-methionine + 2 oxidized [2Fe-2S]-[ferredoxin] + S-adenosyl-L-homocysteine. It catalyses the reaction adenosine(37) in tRNA + 2 reduced [2Fe-2S]-[ferredoxin] + 2 S-adenosyl-L-methionine = 2-methyladenosine(37) in tRNA + 5'-deoxyadenosine + L-methionine + 2 oxidized [2Fe-2S]-[ferredoxin] + S-adenosyl-L-homocysteine. Its function is as follows. Specifically methylates position 2 of adenine 2503 in 23S rRNA and position 2 of adenine 37 in tRNAs. m2A2503 modification seems to play a crucial role in the proofreading step occurring at the peptidyl transferase center and thus would serve to optimize ribosomal fidelity. The sequence is that of Dual-specificity RNA methyltransferase RlmN from Actinobacillus succinogenes (strain ATCC 55618 / DSM 22257 / CCUG 43843 / 130Z).